The following is a 356-amino-acid chain: Ferrochelatase (356 aa).

Residues histidine 214 and glutamate 295 each contribute to the Fe cation site.

Belongs to the ferrochelatase family.

Its subcellular location is the cytoplasm. It catalyses the reaction heme b + 2 H(+) = protoporphyrin IX + Fe(2+). The protein operates within porphyrin-containing compound metabolism; protoheme biosynthesis; protoheme from protoporphyrin-IX: step 1/1. Functionally, catalyzes the ferrous insertion into protoporphyrin IX. In Paraburkholderia phytofirmans (strain DSM 17436 / LMG 22146 / PsJN) (Burkholderia phytofirmans), this protein is Ferrochelatase.